Reading from the N-terminus, the 1915-residue chain is Cysteine repeat modular protein 2 (1915 aa).

The signal sequence occupies residues 1 to 23 (MKFKKELINILALIFVLKKNIFA). FU repeat units lie at residues 53–98 (LGLC…QTYV), 104–151 (SCIC…GYTQ), 161–208 (QLLC…LQYK), 210–263 (NGIC…GYVV), and 267–315 (TQRC…GNYQ). N-linked (GlcNAc...) asparagine glycosylation occurs at N138. 3 N-linked (GlcNAc...) asparagine glycosylation sites follow: N274, N279, and N316. FU repeat units follow at residues 317–362 (SSLC…GFYT), 373–422 (QPIC…QTYY), 427–492 (TRSC…GFYQ), 496–546 (NNSC…SQNN), and 554–602 (TQAC…GTYM). N-linked (GlcNAc...) asparagine glycosylation is present at N409. Residues N496, N572, N603, and N621 are each glycosylated (N-linked (GlcNAc...) asparagine). FU repeat units follow at residues 606 to 639 (TNQC…LQQN), 640 to 686 (YNVC…GFYV), and 690 to 739 (QQAC…NECL). Residue N742 is glycosylated (N-linked (GlcNAc...) asparagine). FU repeat units lie at residues 760 to 814 (DGQC…GFYY) and 818 to 865 (NKQC…GYYQ). N-linked (GlcNAc...) asparagine glycosylation is found at N909, N930, N1051, N1085, and N1193. The region spanning 1184–1224 (VQIPCDSNINCSGNGKCLWSQDNYNEILCICNINYAGRYCE) is the EGF-like domain. Cystine bridges form between C1188–C1200, C1194–C1212, and C1214–C1223. Residues N1250, N1297, N1519, N1546, N1554, N1580, and N1596 are each glycosylated (N-linked (GlcNAc...) asparagine). Helical transmembrane passes span 1599-1619 (LLYA…ISII), 1662-1682 (YAQL…VYSL), 1704-1724 (STSV…VNLF), 1763-1783 (GLVF…ILSF), and 1796-1816 (FASF…FCFI). N1867 carries an N-linked (GlcNAc...) asparagine glycan.

The protein resides in the membrane. In terms of biological role, required for mucocyst secretion. The protein is Cysteine repeat modular protein 2 of Tetrahymena thermophila (strain SB210).